The following is a 748-amino-acid chain: Rho GTPase-activating protein 24 (748 aa).

Residues 18-124 (NATKCGWLRK…WVKSIRRVIW (107 aa)) form the PH domain. Residues 134 to 328 (QKLEDTVRYE…VMISKHDRLF (195 aa)) enclose the Rho-GAP domain. Residues 328-476 (FPKDTEPQSK…SSGTKMGTHS (149 aa)) are disordered. 2 stretches are compositionally biased toward polar residues: residues 335–347 (QSKP…SNNN) and 356–368 (GQLQ…NTKE). A phosphoserine mark is found at serine 369, serine 391, serine 396, serine 398, serine 402, serine 413, serine 415, and serine 437. Positions 369–381 (SPVRRCSWDKPES) are enriched in basic and acidic residues. Positions 382–405 (PQRSSMDNGSPTALSGSKTNSPRN) are enriched in polar residues. Residues 432-476 (IVTNGSFSSSNAEGVEKTQTTPNGSLQARRTSSLKSSGTKMGTHS) are compositionally biased toward polar residues. Threonine 452 bears the Phosphothreonine mark. Serine 495 carries the post-translational modification Phosphoserine. Positions 582–640 (DFYGGNFEDPVLDGPPQDDLSHPGDYENKSDRRSVGGRSSRATSSSDNSETFVGNTSSN) are disordered. Over residues 600 to 615 (DLSHPGDYENKSDRRS) the composition is skewed to basic and acidic residues. The segment covering 617–630 (GGRSSRATSSSDNS) has biased composition (low complexity). The segment covering 631 to 640 (ETFVGNTSSN) has biased composition (polar residues). A coiled-coil region spans residues 649–729 (SSLKQEMTKQ…KEMEQFFSTF (81 aa)).

Interacts with FLNA. In terms of processing, phosphorylated by ROCK, leading to activate the RacGAP activity.

Its subcellular location is the cytoplasm. It is found in the cytoskeleton. It localises to the cell junction. The protein resides in the adherens junction. The protein localises to the focal adhesion. Its subcellular location is the cell projection. Its function is as follows. Rho GTPase-activating protein involved in cell polarity, cell morphology and cytoskeletal organization. Acts as a GTPase activator for the Rac-type GTPase by converting it to an inactive GDP-bound state. Controls actin remodeling by inactivating Rac downstream of Rho leading to suppress leading edge protrusion and promotes cell retraction to achieve cellular polarity. Able to suppress RAC1 and CDC42 activity in vitro. Overexpression induces cell rounding with partial or complete disruption of actin stress fibers and formation of membrane ruffles, lamellipodia, and filopodia. Isoform 2 is a vascular cell-specific GAP involved in modulation of angiogenesis. The chain is Rho GTPase-activating protein 24 (Arhgap24) from Rattus norvegicus (Rat).